The sequence spans 67 residues: Protein AaeX (67 aa).

2 helical membrane passes run 3–23 and 43–63; these read LFPV…ELLL and FVWH…YLIS.

The protein belongs to the AaeX family.

It localises to the cell membrane. In Escherichia coli (strain K12 / DH10B), this protein is Protein AaeX.